Consider the following 327-residue polypeptide: Phenylalanine--tRNA ligase alpha subunit (327 aa).

Mg(2+) is bound at residue Glu252.

Belongs to the class-II aminoacyl-tRNA synthetase family. Phe-tRNA synthetase alpha subunit type 1 subfamily. In terms of assembly, tetramer of two alpha and two beta subunits. It depends on Mg(2+) as a cofactor.

Its subcellular location is the cytoplasm. The catalysed reaction is tRNA(Phe) + L-phenylalanine + ATP = L-phenylalanyl-tRNA(Phe) + AMP + diphosphate + H(+). The protein is Phenylalanine--tRNA ligase alpha subunit of Shigella flexneri.